Here is a 260-residue protein sequence, read N- to C-terminus: Putative cysteine-rich repeat secretory protein 23 (260 aa).

The N-terminal stretch at 1–31 is a signal peptide; the sequence is MSSSFVYKSLFLVPILAVVAMQLSFVQSVLS. Gnk2-homologous domains follow at residues 38-136 and 142-254; these read YLHH…NISY and LPEQ…LYLF.

It belongs to the cysteine-rich repeat secretory protein family.

It localises to the secreted. The protein is Putative cysteine-rich repeat secretory protein 23 (CRRSP23) of Arabidopsis thaliana (Mouse-ear cress).